Reading from the N-terminus, the 694-residue chain is MSTDIAIKVDADHLRRDAFLYVRQSSLRQVFENTESTKRQYALRDRAVALGWPIERVHVIDSDLGLSGAQSQDRDGFQHLVSEVAMGHAGIVLGLEVSRLARNNADWHRLLELAALSRTLIMDEDGVYDPAYFNDRMLLGLKGTMSEAELHILKSRLQGGILNKARRGELEMPLPIGLVYTPDARVVLDPDRQIQDTVRLLFDTFRQTGSACAVVRRLRGEKILFPRRIRRGIGKGDVLWNEIDHSRVLQILHNPRYAGAFAYGRTRTAYNAKLKPVQLRVARSDWQVLIPDAHDGYISWAEYERNQAALEQNATGFSPGLRGRMPRQGSGLLQGRLLCGRCGARMRVHYEPFEGRLRPYYVCNEAVVRHAGKHCQWVRGAPVDEAVSALLLEVMAPAAIDVALAVQQEITQRVEQAAALRGTQLQRARYEAELARRRYLKVDPDNRLVADALEADWNARLRDLDALQREHERQNEADHSLLDEPAQQRIRALTADFPRIWNDERTGAVERKRMLGLLIEDVTLLVDDEVNINIRWRGGRTQSLSVARPRPMSVIRKTPAQVVALINELLEATNDRQIAARLNELGHRNWRGEPFTPKKVMLVRRTYGLKSRYERLREGGMLTGEEVAQQLGVCESTVHQLGRKGTLKRHRYASNHRYLYEPPGNVRLEKGAGSRYGGRQPRLIVAQPLQQGAS.

The 152-residue stretch at 17 to 168 folds into the Resolvase/invertase-type recombinase catalytic domain; the sequence is DAFLYVRQSS…GGILNKARRG (152 aa). The O-(5'-phospho-DNA)-serine intermediate role is filled by serine 25. A DNA-binding region (recombinase) is located at residues 175 to 316; sequence PIGLVYTPDA…QAALEQNATG (142 aa). A helical transmembrane segment spans residues 386–406; the sequence is AVSALLLEVMAPAAIDVALAV.

The protein localises to the membrane. This is an uncharacterized protein from Sinorhizobium fredii (strain NBRC 101917 / NGR234).